A 180-amino-acid chain; its full sequence is Large ribosomal subunit protein uL6 (180 aa).

It belongs to the universal ribosomal protein uL6 family. Part of the 50S ribosomal subunit.

This protein binds to the 23S rRNA, and is important in its secondary structure. It is located near the subunit interface in the base of the L7/L12 stalk, and near the tRNA binding site of the peptidyltransferase center. The polypeptide is Large ribosomal subunit protein uL6 (Dictyoglomus thermophilum (strain ATCC 35947 / DSM 3960 / H-6-12)).